The chain runs to 90 residues: Acylphosphatase (90 aa).

In terms of domain architecture, Acylphosphatase-like spans 3 to 90 (AVTLKATGRV…QNYHDFRITN (88 aa)). Catalysis depends on residues R18 and N36.

This sequence belongs to the acylphosphatase family.

It catalyses the reaction an acyl phosphate + H2O = a carboxylate + phosphate + H(+). This is Acylphosphatase (acyP) from Lactiplantibacillus plantarum (strain ATCC BAA-793 / NCIMB 8826 / WCFS1) (Lactobacillus plantarum).